The primary structure comprises 313 residues: Ornithine carbamoyltransferase (313 aa).

Residues 61–64 (STRT), Gln-88, Arg-112, and 139–142 (HPCQ) contribute to the carbamoyl phosphate site. L-ornithine is bound by residues Asn-170, Asp-228, and 232–233 (SM). Residues 268–269 (CL) and Arg-296 each bind carbamoyl phosphate.

Belongs to the aspartate/ornithine carbamoyltransferase superfamily. OTCase family.

It localises to the cytoplasm. It catalyses the reaction carbamoyl phosphate + L-ornithine = L-citrulline + phosphate + H(+). It participates in amino-acid biosynthesis; L-arginine biosynthesis; L-arginine from L-ornithine and carbamoyl phosphate: step 1/3. Its function is as follows. Reversibly catalyzes the transfer of the carbamoyl group from carbamoyl phosphate (CP) to the N(epsilon) atom of ornithine (ORN) to produce L-citrulline. This is Ornithine carbamoyltransferase from Bordetella parapertussis (strain 12822 / ATCC BAA-587 / NCTC 13253).